Consider the following 138-residue polypeptide: Putative pre-16S rRNA nuclease (138 aa).

It belongs to the YqgF nuclease family.

The protein localises to the cytoplasm. Its function is as follows. Could be a nuclease involved in processing of the 5'-end of pre-16S rRNA. The polypeptide is Putative pre-16S rRNA nuclease (Mycoplasma genitalium (strain ATCC 33530 / DSM 19775 / NCTC 10195 / G37) (Mycoplasmoides genitalium)).